A 290-amino-acid polypeptide reads, in one-letter code: Poly-beta-1,6-N-acetyl-D-glucosamine N-deacetylase (290 aa).

A signal peptide spans 1–28; sequence MKYRKFIILVLSILIILPVSTLDGHHIA. Residues 114–290 enclose the NodB homology domain; that stretch reads RSVWINFDDM…KRWDGFHEKD (177 aa).

This sequence belongs to the polysaccharide deacetylase family.

It is found in the secreted. The protein localises to the cell wall. Catalyzes the N-deacetylation of poly-beta-1,6-N-acetyl-D-glucosamine (PNAG, also referred to as PIA), a biofilm adhesin polysaccharide. N-deacetylation is crucial for attachment of the polysaccharide to the bacterial cell surface; it leads to the introduction of positive charges in the otherwise neutral PIA polymer, allowing electrostatic interactions. This is Poly-beta-1,6-N-acetyl-D-glucosamine N-deacetylase (icaB) from Staphylococcus aureus (strain NCTC 8325 / PS 47).